A 99-amino-acid polypeptide reads, in one-letter code: Citrate lyase acyl carrier protein (99 aa).

The residue at position 14 (S14) is an O-(phosphoribosyl dephospho-coenzyme A)serine.

The protein belongs to the CitD family. Oligomer with a subunit composition of (alpha,beta,gamma)6.

It is found in the cytoplasm. Functionally, covalent carrier of the coenzyme of citrate lyase. This is Citrate lyase acyl carrier protein from Edwardsiella ictaluri (strain 93-146).